Here is a 352-residue protein sequence, read N- to C-terminus: N-acetyl-gamma-glutamyl-phosphate reductase 1 (352 aa).

It belongs to the NAGSA dehydrogenase family. Type 1 subfamily.

The protein resides in the cytoplasm. The enzyme catalyses N-acetyl-L-glutamate 5-semialdehyde + phosphate + NADP(+) = N-acetyl-L-glutamyl 5-phosphate + NADPH + H(+). It participates in amino-acid biosynthesis; L-arginine biosynthesis; N(2)-acetyl-L-ornithine from L-glutamate: step 3/4. Its function is as follows. Catalyzes the NADPH-dependent reduction of N-acetyl-5-glutamyl phosphate to yield N-acetyl-L-glutamate 5-semialdehyde. The polypeptide is N-acetyl-gamma-glutamyl-phosphate reductase 1 (Nostoc sp. (strain PCC 7120 / SAG 25.82 / UTEX 2576)).